The primary structure comprises 567 residues: Geranylgeranyl transferase type-2 subunit alpha (567 aa).

PFTA repeat units lie at residues leucine 44 to threonine 78, leucine 88 to glutamate 122, asparagine 124 to valine 158, alanine 159 to proline 193, valine 207 to proline 241, and valine 363 to proline 397. Serine 98 carries the phosphoserine modification. LRR repeat units follow at residues aspartate 442–leucine 463, leucine 464–arginine 486, cysteine 487–proline 508, arginine 509–alanine 530, and arginine 534–leucine 555.

Belongs to the protein prenyltransferase subunit alpha family. In terms of assembly, heterotrimer composed of RABGGTA, RABGGTB and CHM; within this trimer, RABGGTA and RABGGTB form the catalytic component B, while CHM (component A) mediates peptide substrate binding. The Rab GGTase dimer (RGGT) interacts with CHM (component A) prior to Rab protein binding; the association is stabilized by geranylgeranyl pyrophosphate (GGpp). The CHM:RGGT:Rab complex is destabilized by GGpp. Interacts with non-phosphorylated form of RAB8A; phosphorylation of RAB8A at 'Thr-72' disrupts this interaction.

The enzyme catalyses geranylgeranyl diphosphate + L-cysteinyl-[protein] = S-geranylgeranyl-L-cysteinyl-[protein] + diphosphate. Its activity is regulated as follows. The enzymatic reaction requires the aid of a Rab escort protein (also called component A), such as CHM. In terms of biological role, catalyzes the transfer of a geranylgeranyl moiety from geranylgeranyl diphosphate to both cysteines of Rab proteins with the C-terminal sequence -XXCC, -XCXC and -CCXX, such as RAB1A, RAB3A, RAB5A and RAB7A. In Mus musculus (Mouse), this protein is Geranylgeranyl transferase type-2 subunit alpha (Rabggta).